Consider the following 219-residue polypeptide: Thiopurine S-methyltransferase (219 aa).

Positions 10, 45, 66, and 130 each coordinate S-adenosyl-L-methionine.

The protein belongs to the class I-like SAM-binding methyltransferase superfamily. TPMT family.

It localises to the cytoplasm. The catalysed reaction is S-adenosyl-L-methionine + a thiopurine = S-adenosyl-L-homocysteine + a thiopurine S-methylether.. This Psychrobacter cryohalolentis (strain ATCC BAA-1226 / DSM 17306 / VKM B-2378 / K5) protein is Thiopurine S-methyltransferase.